Reading from the N-terminus, the 512-residue chain is Methionine--tRNA ligase (512 aa).

The 'HIGH' region motif lies at 12–22; sequence YYVNDVPHIGH. The short motif at 295–299 is the 'KMSKS' region element; the sequence is KISKS. An ATP-binding site is contributed by K298.

The protein belongs to the class-I aminoacyl-tRNA synthetase family. MetG type 2B subfamily. Monomer.

The protein resides in the cytoplasm. It carries out the reaction tRNA(Met) + L-methionine + ATP = L-methionyl-tRNA(Met) + AMP + diphosphate. Its function is as follows. Is required not only for elongation of protein synthesis but also for the initiation of all mRNA translation through initiator tRNA(fMet) aminoacylation. This chain is Methionine--tRNA ligase, found in Rickettsia felis (strain ATCC VR-1525 / URRWXCal2) (Rickettsia azadi).